The primary structure comprises 797 residues: RAS guanyl-releasing protein 1 (797 aa).

A compositionally biased stretch (basic and acidic residues) spans 1–12 (MGTLGKAREAPR). Residues 1–23 (MGTLGKAREAPRKPSHGCRAASK) are disordered. Residues 53–176 (LGHLAKGASL…RLIDTTQINA (124 aa)) form the N-terminal Ras-GEF domain. Residues 57-110 (AKGASLDDLIDSCIQSFDADGNLCRSNQLLQVMLTMHRIVISSAELLQKVITLY) form a ras exchanger motif region; required for transforming activity region. Threonine 184 is subject to Phosphothreonine; by PKC. One can recognise a Ras-GEF domain in the interval 205-436 (EPEELSEHLT…YELSYAREPR (232 aa)). EF-hand domains are found at residues 470-505 (HVQR…FPFS) and 506-532 (FCVM…ASSI). 5 residues coordinate Ca(2+): aspartate 483, aspartate 485, aspartate 487, tyrosine 489, and glutamate 494. The Phorbol-ester/DAG-type zinc finger occupies 541–591 (PHNFQETTYLKPTFCDNCAGFLWGVIKQGYRCKDCGMNCHKQCKDLVVFEC). Residues 673 to 694 (TQTESQPWIGSEGPSGPFVLSS) form a disordered region. The interval 686–694 (PSGPFVLSS) is suppress the PT region-mediated translocation to plasma membrane. Positions 718 to 797 (LVRKRAFVKW…LAQMEQGDCS (80 aa)) are PT region; mediates the BCR-dependent translocation to plasma membrane. Residues 746–786 (PTYQELEQEINTLKADNDALKIQLKYAQKKIESLQLEKSNH) adopt a coiled-coil conformation.

This sequence belongs to the RASGRP family. As to quaternary structure, homodimer. Forms a signaling complex with DGKZ and HRAS. Interacts with F-actin. Interacts with SKAP1. As to expression, expressed in brain with higher expression in cerebellum, cerebral cortex and amygdala. Expressed in the hematopoietic system. Expressed in T-cells (at protein level). Expressed in NK cells (at protein level).

Its subcellular location is the cytoplasm. It is found in the cytosol. It localises to the cell membrane. The protein localises to the golgi apparatus membrane. The protein resides in the endoplasmic reticulum membrane. Its activity is regulated as follows. Autoinhibited. Activated by diacylglycerol and calcium binding, which induces a conformational change releasing the autoinhibitory state. Regulated by DGKA. Regulated by DGKZ. Regulated by PLC gamma and F-actin polymerization. In terms of biological role, functions as a calcium- and diacylglycerol (DAG)-regulated nucleotide exchange factor specifically activating Ras through the exchange of bound GDP for GTP. Activates the Erk/MAP kinase cascade. Regulates T-cell/B-cell development, homeostasis and differentiation by coupling T-lymphocyte/B-lymphocyte antigen receptors to Ras. Regulates NK cell cytotoxicity and ITAM-dependent cytokine production by activation of Ras-mediated ERK and JNK pathways. Functions in mast cell degranulation and cytokine secretion, regulating FcERI-evoked allergic responses. May also function in differentiation of other cell types. The sequence is that of RAS guanyl-releasing protein 1 (RASGRP1) from Homo sapiens (Human).